A 342-amino-acid polypeptide reads, in one-letter code: S-adenosylmethionine:tRNA ribosyltransferase-isomerase (342 aa).

This sequence belongs to the QueA family. As to quaternary structure, monomer.

Its subcellular location is the cytoplasm. It carries out the reaction 7-aminomethyl-7-carbaguanosine(34) in tRNA + S-adenosyl-L-methionine = epoxyqueuosine(34) in tRNA + adenine + L-methionine + 2 H(+). The protein operates within tRNA modification; tRNA-queuosine biosynthesis. In terms of biological role, transfers and isomerizes the ribose moiety from AdoMet to the 7-aminomethyl group of 7-deazaguanine (preQ1-tRNA) to give epoxyqueuosine (oQ-tRNA). The chain is S-adenosylmethionine:tRNA ribosyltransferase-isomerase from Streptococcus mutans serotype c (strain ATCC 700610 / UA159).